We begin with the raw amino-acid sequence, 228 residues long: Heptaprenylglyceryl phosphate synthase (228 aa).

Residue K12 participates in sn-glycerol 1-phosphate binding. Mg(2+) is bound by residues D14 and S40. Residues 158–163 (YLEYSG), G188, and 208–209 (GN) each bind sn-glycerol 1-phosphate.

Belongs to the GGGP/HepGP synthase family. Group I subfamily. Homodimer. The cofactor is Mg(2+).

It catalyses the reaction sn-glycerol 1-phosphate + all-trans-heptaprenyl diphosphate = 3-heptaprenyl-sn-glycero-1-phosphate + diphosphate. Its pathway is membrane lipid metabolism; glycerophospholipid metabolism. In terms of biological role, prenyltransferase that catalyzes in vivo the transfer of the heptaprenyl moiety of heptaprenyl pyrophosphate (HepPP; 35 carbon atoms) to the C3 hydroxyl of sn-glycerol-1-phosphate (G1P), producing heptaprenylglyceryl phosphate (HepGP). This reaction is an ether-bond-formation step in the biosynthesis of archaea-type G1P-based membrane lipids found in Bacillales. To a much lesser extent, is also able to use geranyl diphosphate (GPP; C10) and geranylgeranyl diphosphate (GGPP; C20) as the prenyl donors, but not farnesyl pyrophosphate (FPP; C15). Cannot use glycerol-3-phosphate (G3P) or 3-phosphoglycerate (3PG) as an acceptor. This chain is Heptaprenylglyceryl phosphate synthase, found in Bacillus subtilis (strain 168).